We begin with the raw amino-acid sequence, 527 residues long: Peptide chain release factor 3 (527 aa).

Residues 9–277 (AKRRTFAIIS…AVVDWAPRPL (269 aa)) enclose the tr-type G domain. GTP contacts are provided by residues 18–25 (SHPDAGKT), 86–90 (DTPGH), and 140–143 (NKLD).

It belongs to the TRAFAC class translation factor GTPase superfamily. Classic translation factor GTPase family. PrfC subfamily.

The protein resides in the cytoplasm. Increases the formation of ribosomal termination complexes and stimulates activities of RF-1 and RF-2. It binds guanine nucleotides and has strong preference for UGA stop codons. It may interact directly with the ribosome. The stimulation of RF-1 and RF-2 is significantly reduced by GTP and GDP, but not by GMP. The polypeptide is Peptide chain release factor 3 (Ectopseudomonas mendocina (strain ymp) (Pseudomonas mendocina)).